The sequence spans 427 residues: UDP-N-acetylglucosamine 1-carboxyvinyltransferase (427 aa).

A phosphoenolpyruvate-binding site is contributed by 22-23 (KN). Arginine 99 is a UDP-N-acetyl-alpha-D-glucosamine binding site. The active-site Proton donor is cysteine 123. Cysteine 123 carries the 2-(S-cysteinyl)pyruvic acid O-phosphothioketal modification. UDP-N-acetyl-alpha-D-glucosamine-binding positions include 128–132 (RPIDL), aspartate 313, and isoleucine 335.

It belongs to the EPSP synthase family. MurA subfamily.

It is found in the cytoplasm. It catalyses the reaction phosphoenolpyruvate + UDP-N-acetyl-alpha-D-glucosamine = UDP-N-acetyl-3-O-(1-carboxyvinyl)-alpha-D-glucosamine + phosphate. The protein operates within cell wall biogenesis; peptidoglycan biosynthesis. Its function is as follows. Cell wall formation. Adds enolpyruvyl to UDP-N-acetylglucosamine. The protein is UDP-N-acetylglucosamine 1-carboxyvinyltransferase of Novosphingobium aromaticivorans (strain ATCC 700278 / DSM 12444 / CCUG 56034 / CIP 105152 / NBRC 16084 / F199).